We begin with the raw amino-acid sequence, 122 residues long: Large ribosomal subunit protein uL24 (122 aa).

The protein belongs to the universal ribosomal protein uL24 family. As to quaternary structure, part of the 50S ribosomal subunit.

Functionally, one of two assembly initiator proteins, it binds directly to the 5'-end of the 23S rRNA, where it nucleates assembly of the 50S subunit. One of the proteins that surrounds the polypeptide exit tunnel on the outside of the subunit. This chain is Large ribosomal subunit protein uL24, found in Trichodesmium erythraeum (strain IMS101).